Reading from the N-terminus, the 393-residue chain is Ceramide synthase 4 (393 aa).

At 1 to 31 (MWSSLNDWLWNERLWLPANISWAQLEDHDGL) the chain is on the lumenal side. Asn-19 carries N-linked (GlcNAc...) asparagine glycosylation. The helical transmembrane segment at 32 to 52 (VFPHPQDTLMAVPLALALVVV) threads the bilayer. The homeobox-like stretch occupies residues 67-128 (WLGVRNQIRR…RRRRNQDRPC (62 aa)). The 202-residue stretch at 131 to 332 (KKFCESSWKF…ILCMIYSFIK (202 aa)) folds into the TLC domain. 4 helical membrane passes run 140 to 160 (FVFY…ESWL), 179 to 199 (LYHW…TLPF), 209 to 229 (QVIH…LNLL), and 260 to 280 (MCDT…LVLF). The Last loop motif motif lies at 291-301 (ESIGNFSPFFG). Residues 304 to 324 (FLNILLVILQLLHVFWSWLIL) form a helical membrane-spanning segment. At 325 to 393 (CMIYSFIKKG…RMVNRHTPAT (69 aa)) the chain is on the cytoplasmic side. A phosphoserine mark is found at Ser-342, Ser-349, and Ser-350. Positions 346–356 (ELDSSDGEAAE) are enriched in acidic residues. The tract at residues 346-393 (ELDSSDGEAAEECPQMKNGAAQRPGAAPTDGPRSRAAGRMVNRHTPAT) is disordered.

Phosphorylated at the C-terminus by CK2.

The protein resides in the endoplasmic reticulum membrane. The catalysed reaction is sphinganine + octadecanoyl-CoA = N-(octadecanoyl)-sphinganine + CoA + H(+). The enzyme catalyses eicosanoyl-CoA + sphinganine = N-eicosanoylsphinganine + CoA + H(+). It catalyses the reaction docosanoyl-CoA + sphinganine = N-docosanoylsphinganine + CoA + H(+). It carries out the reaction tetracosanoyl-CoA + sphinganine = N-tetracosanoylsphinganine + CoA + H(+). The catalysed reaction is hexacosanoyl-CoA + sphinganine = N-hexacosanoylsphinganine + CoA + H(+). The enzyme catalyses a fatty acyl-CoA + sphing-4-enine = an N-acylsphing-4-enine + CoA + H(+). It catalyses the reaction sphing-4-enine + octadecanoyl-CoA = N-octadecanoylsphing-4-enine + CoA + H(+). It carries out the reaction hexadecasphinganine + octadecanoyl-CoA = N-octadecanoylhexadecasphinganine + CoA + H(+). Its pathway is lipid metabolism; sphingolipid metabolism. Functionally, ceramide synthase that catalyzes formation of ceramide from sphinganine and acyl-CoA substrates, with high selectivity toward long and very-long chains (C18:0-C22:0) as acyl donor. The polypeptide is Ceramide synthase 4 (Bos taurus (Bovine)).